A 242-amino-acid polypeptide reads, in one-letter code: MTKQLKLSALFVALLASGTAVAGEASVQGYTVSGQSNEIVRNNYGECWKNAYFDKASQGRVECGDAVAAPEPEPEPEPAPAPVVVVEQAPQYVDETISLSAKTLFGFDKDSLRAEAQDNLKVLAQRLGQTNIQSVRVEGHTDFMGSDKYNQALSERRAYVVANNLVSNGVPVSRISAVGLGESQAQMTQVCEAEVAKLGAKVSKAKKREALIACIEPDRRVDVKIRSIVTRQVVPAHNHHQH.

An N-terminal signal peptide occupies residues 1 to 22 (MTKQLKLSALFVALLASGTAVA). Repeat copies occupy residues 69–70 (AP), 71–72 (EP), 73–74 (EP), 75–76 (EP), 77–78 (EP), 79–80 (AP), and 81–82 (AP). The segment at 69–82 (APEPEPEPEPAPAP) is 7 X 2 AA tandem repeats of X-P. Positions 92–229 (YVDETISLSA…RVDVKIRSIV (138 aa)) constitute an OmpA-like domain. Cysteine 191 and cysteine 214 form a disulfide bridge.

The protein belongs to the outer membrane OOP (TC 1.B.6) superfamily.

Its subcellular location is the cell outer membrane. This is Outer membrane protein class 4 (rmpM) from Neisseria meningitidis serogroup A / serotype 4A (strain DSM 15465 / Z2491).